Reading from the N-terminus, the 434-residue chain is Nicotinate phosphoribosyltransferase (434 aa).

Histidine 242 is subject to Phosphohistidine; by autocatalysis.

The protein belongs to the NAPRTase family. In terms of processing, transiently phosphorylated on a His residue during the reaction cycle. Phosphorylation strongly increases the affinity for substrates and increases the rate of nicotinate D-ribonucleotide production. Dephosphorylation regenerates the low-affinity form of the enzyme, leading to product release.

The catalysed reaction is nicotinate + 5-phospho-alpha-D-ribose 1-diphosphate + ATP + H2O = nicotinate beta-D-ribonucleotide + ADP + phosphate + diphosphate. Its pathway is cofactor biosynthesis; NAD(+) biosynthesis; nicotinate D-ribonucleotide from nicotinate: step 1/1. Its function is as follows. Catalyzes the synthesis of beta-nicotinate D-ribonucleotide from nicotinate and 5-phospho-D-ribose 1-phosphate at the expense of ATP. The sequence is that of Nicotinate phosphoribosyltransferase from Nitrobacter hamburgensis (strain DSM 10229 / NCIMB 13809 / X14).